We begin with the raw amino-acid sequence, 630 residues long: Alpha-1,4-glucan:maltose-1-phosphate maltosyltransferase (630 aa).

Alpha-maltose 1-phosphate is bound by residues arginine 234, glutamine 294, and aspartate 329. Aspartate 365 functions as the Nucleophile in the catalytic mechanism. Asparagine 366 provides a ligand contact to alpha-maltose 1-phosphate. The active-site Proton donor is the glutamate 394. Alpha-maltose 1-phosphate is bound at residue lysine 504–tyrosine 505.

It belongs to the glycosyl hydrolase 13 family. GlgE subfamily. As to quaternary structure, homodimer.

It carries out the reaction alpha-maltose 1-phosphate + [(1-&gt;4)-alpha-D-glucosyl](n) = [(1-&gt;4)-alpha-D-glucosyl](n+2) + phosphate. Its function is as follows. Maltosyltransferase that uses maltose 1-phosphate (M1P) as the sugar donor to elongate linear or branched alpha-(1-&gt;4)-glucans. Is involved in a branched alpha-glucan biosynthetic pathway from trehalose, together with TreS, Mak and GlgB. In Picrophilus torridus (strain ATCC 700027 / DSM 9790 / JCM 10055 / NBRC 100828 / KAW 2/3), this protein is Alpha-1,4-glucan:maltose-1-phosphate maltosyltransferase.